The chain runs to 325 residues: Beta-ketoacyl-[acyl-carrier-protein] synthase III 2 (325 aa).

Residues Cys113 and His250 contribute to the active site. Positions 251–255 (SANLR) are ACP-binding. Residue Asn280 is part of the active site.

Belongs to the thiolase-like superfamily. FabH family. As to quaternary structure, homodimer.

The protein resides in the cytoplasm. The catalysed reaction is 3-methylbutanoyl-CoA + malonyl-[ACP] + H(+) = 5-methyl-3-oxohexanoyl-[ACP] + CO2 + CoA. The enzyme catalyses 2-methylpropanoyl-CoA + malonyl-[ACP] + H(+) = 4-methyl-3-oxopentanoyl-[ACP] + CO2 + CoA. It catalyses the reaction (2S)-2-methylbutanoyl-CoA + malonyl-[ACP] + H(+) = (4S)-4-methyl-3-oxohexanoyl-[ACP] + CO2 + CoA. It carries out the reaction malonyl-[ACP] + acetyl-CoA + H(+) = 3-oxobutanoyl-[ACP] + CO2 + CoA. The catalysed reaction is malonyl-[ACP] + propanoyl-CoA + H(+) = 3-oxopentanoyl-[ACP] + CO2 + CoA. The enzyme catalyses butanoyl-CoA + malonyl-[ACP] + H(+) = 3-oxohexanoyl-[ACP] + CO2 + CoA. It catalyses the reaction pentanoyl-CoA + malonyl-[ACP] + H(+) = 3-oxoheptanoyl-[ACP] + CO2 + CoA. It carries out the reaction hexanoyl-CoA + malonyl-[ACP] + H(+) = 3-oxooctanoyl-[ACP] + CO2 + CoA. The catalysed reaction is heptanoyl-CoA + malonyl-[ACP] + H(+) = 3-oxononanoyl-[ACP] + CO2 + CoA. The protein operates within lipid metabolism; fatty acid biosynthesis. Catalyzes the condensation reaction of fatty acid synthesis by the addition to an acyl acceptor of two carbons from malonyl-ACP. Catalyzes the first condensation reaction which initiates fatty acid synthesis and may therefore play a role in governing the total rate of fatty acid production. Possesses both acetoacetyl-ACP synthase and acetyl transacylase activities. Has some substrate specificity for branched chain acyl-CoA, determining the biosynthesis of branched-chain of fatty acids instead of straight-chain. The protein is Beta-ketoacyl-[acyl-carrier-protein] synthase III 2 of Bacillus subtilis (strain 168).